Here is a 470-residue protein sequence, read N- to C-terminus: ATP-dependent protease ATPase subunit HslU (470 aa).

ATP is bound by residues valine 22 and glycine 64–glutamate 69. The segment at lysine 145–arginine 187 is disordered. Residues aspartate 283, glutamate 348, and arginine 420 each contribute to the ATP site.

It belongs to the ClpX chaperone family. HslU subfamily. As to quaternary structure, a double ring-shaped homohexamer of HslV is capped on each side by a ring-shaped HslU homohexamer. The assembly of the HslU/HslV complex is dependent on binding of ATP.

It is found in the cytoplasm. Functionally, ATPase subunit of a proteasome-like degradation complex; this subunit has chaperone activity. The binding of ATP and its subsequent hydrolysis by HslU are essential for unfolding of protein substrates subsequently hydrolyzed by HslV. HslU recognizes the N-terminal part of its protein substrates and unfolds these before they are guided to HslV for hydrolysis. The sequence is that of ATP-dependent protease ATPase subunit HslU from Staphylococcus saprophyticus subsp. saprophyticus (strain ATCC 15305 / DSM 20229 / NCIMB 8711 / NCTC 7292 / S-41).